We begin with the raw amino-acid sequence, 72 residues long: UPF0154 protein LBA1278 (72 aa).

The helical transmembrane segment at 3–23 threads the bilayer; it reads LGLAIFLIIIALLVGATAGFY.

This sequence belongs to the UPF0154 family.

It is found in the cell membrane. This Lactobacillus acidophilus (strain ATCC 700396 / NCK56 / N2 / NCFM) protein is UPF0154 protein LBA1278.